The following is a 212-amino-acid chain: Ribonuclease HII (212 aa).

In terms of domain architecture, RNase H type-2 spans 28-212; sequence SLIAGIDEVG…KSFAPVRQVF (185 aa). 3 residues coordinate a divalent metal cation: aspartate 34, glutamate 35, and aspartate 127.

The protein belongs to the RNase HII family. It depends on Mn(2+) as a cofactor. The cofactor is Mg(2+).

Its subcellular location is the cytoplasm. It carries out the reaction Endonucleolytic cleavage to 5'-phosphomonoester.. Functionally, endonuclease that specifically degrades the RNA of RNA-DNA hybrids. This chain is Ribonuclease HII, found in Chlamydia abortus (strain DSM 27085 / S26/3) (Chlamydophila abortus).